The primary structure comprises 297 residues: Glycine--tRNA ligase alpha subunit (297 aa).

It belongs to the class-II aminoacyl-tRNA synthetase family. In terms of assembly, tetramer of two alpha and two beta subunits.

Its subcellular location is the cytoplasm. It carries out the reaction tRNA(Gly) + glycine + ATP = glycyl-tRNA(Gly) + AMP + diphosphate. This Halalkalibacterium halodurans (strain ATCC BAA-125 / DSM 18197 / FERM 7344 / JCM 9153 / C-125) (Bacillus halodurans) protein is Glycine--tRNA ligase alpha subunit (glyQ).